A 594-amino-acid chain; its full sequence is Fidgetin-like protein 1 (594 aa).

Disordered stretches follow at residues 1–79 and 239–261; these read MYSP…DDEL and QSIGSLAGIPPARRAPDIPKRCS. Polar residues predominate over residues 56-73; that stretch reads PSDSAQQQPPFKSRSQQN. Residues Ala-319 and 359–364 contribute to the ATP site; that span reads GTGKTM.

Belongs to the AAA ATPase family. As to quaternary structure, hexamer. Requires Mg(2+) as cofactor. In terms of tissue distribution, expressed in germ cells.

It localises to the nucleus. It catalyses the reaction ATP + H2O = ADP + phosphate + H(+). Its function is as follows. Has a role in spindle assembly which acts in the progression through mitosis during embryogenesis. Required for fertility. This chain is Fidgetin-like protein 1 (figl-1), found in Caenorhabditis elegans.